The sequence spans 603 residues: Geraniol synthase, chloroplastic (603 aa).

The transit peptide at 1-35 (MSSISQKVVIGLNKAAANNNLQNLDRRGFKTRCVS) directs the protein to the chloroplast. (2E)-geranyl diphosphate-binding residues include Arg-319, Asp-356, Asp-360, Arg-497, and Asp-500. Mg(2+) contacts are provided by Asp-356 and Asp-360. Residues 356-360 (DDVYD) carry the DDXXD motif motif. The Mg(2+) site is built by Asp-500, Thr-504, and Glu-508.

Belongs to the terpene synthase family. Tpsb subfamily. Monomer. It depends on Mg(2+) as a cofactor. Mn(2+) serves as cofactor.

The protein resides in the plastid. It is found in the chloroplast. The enzyme catalyses (2E)-geranyl diphosphate + H2O = (2E)-geraniol + diphosphate. Its pathway is secondary metabolite biosynthesis; terpenoid biosynthesis. Monoterpene synthase (mono-TPS) involved in the biosynthesis of monoterpenes natural products. Catalyzes the conversion of (2E)-geranyl diphosphate (GPP) into geraniol. In Perilla frutescens var. hirtella (Perilla citriodora), this protein is Geraniol synthase, chloroplastic.